The sequence spans 690 residues: Elongation factor G (690 aa).

The tr-type G domain occupies 8-283 (EDYRNFGIMA…AVVDYLPSPV (276 aa)). GTP contacts are provided by residues 17–24 (AHIDAGKT), 81–85 (DTPGH), and 135–138 (NKMD).

This sequence belongs to the TRAFAC class translation factor GTPase superfamily. Classic translation factor GTPase family. EF-G/EF-2 subfamily.

The protein resides in the cytoplasm. Functionally, catalyzes the GTP-dependent ribosomal translocation step during translation elongation. During this step, the ribosome changes from the pre-translocational (PRE) to the post-translocational (POST) state as the newly formed A-site-bound peptidyl-tRNA and P-site-bound deacylated tRNA move to the P and E sites, respectively. Catalyzes the coordinated movement of the two tRNA molecules, the mRNA and conformational changes in the ribosome. The sequence is that of Elongation factor G from Rhodopseudomonas palustris (strain BisA53).